A 370-amino-acid chain; its full sequence is Popeye domain-containing 2 (370 aa).

The next 2 helical transmembrane spans lie at 51–71 (ALYI…WGWL) and 78–98 (VFIW…HLIF). The tract at residues 275 to 349 (PSPPGSEGGS…SGEDSTSLIL (75 aa)) is disordered. Positions 283–294 (GSASSPPRGSLG) are enriched in low complexity. Composition is skewed to polar residues over residues 307–319 (NPGS…QPDQ) and 330–347 (QHWS…STSL).

The protein belongs to the popeye family. As to expression, expressed in the heart and, slightly, in skeletal muscle.

Its subcellular location is the membrane. It is found in the cell membrane. The protein localises to the sarcolemma. Important for striated muscle differentiation and cardiac morphogenesis. Is also required for cardiac conduction system development, plays a regulatory function in heart rate dynamics mediated, at least in part, through cAMP-binding. This chain is Popeye domain-containing 2, found in Danio rerio (Zebrafish).